Here is a 466-residue protein sequence, read N- to C-terminus: Asparagine--tRNA ligase (466 aa).

The protein belongs to the class-II aminoacyl-tRNA synthetase family. Homodimer.

The protein localises to the cytoplasm. It catalyses the reaction tRNA(Asn) + L-asparagine + ATP = L-asparaginyl-tRNA(Asn) + AMP + diphosphate + H(+). The chain is Asparagine--tRNA ligase from Psychromonas ingrahamii (strain DSM 17664 / CCUG 51855 / 37).